Consider the following 184-residue polypeptide: GTP cyclohydrolase 1 (184 aa).

C75, H78, and C146 together coordinate Zn(2+).

This sequence belongs to the GTP cyclohydrolase I family. Homomer.

It catalyses the reaction GTP + H2O = 7,8-dihydroneopterin 3'-triphosphate + formate + H(+). The protein operates within cofactor biosynthesis; 7,8-dihydroneopterin triphosphate biosynthesis; 7,8-dihydroneopterin triphosphate from GTP: step 1/1. This chain is GTP cyclohydrolase 1, found in Streptococcus pneumoniae serotype 19F (strain G54).